The chain runs to 571 residues: Proline--tRNA ligase (571 aa).

This sequence belongs to the class-II aminoacyl-tRNA synthetase family. ProS type 1 subfamily. In terms of assembly, homodimer.

It localises to the cytoplasm. It carries out the reaction tRNA(Pro) + L-proline + ATP = L-prolyl-tRNA(Pro) + AMP + diphosphate. Its function is as follows. Catalyzes the attachment of proline to tRNA(Pro) in a two-step reaction: proline is first activated by ATP to form Pro-AMP and then transferred to the acceptor end of tRNA(Pro). As ProRS can inadvertently accommodate and process non-cognate amino acids such as alanine and cysteine, to avoid such errors it has two additional distinct editing activities against alanine. One activity is designated as 'pretransfer' editing and involves the tRNA(Pro)-independent hydrolysis of activated Ala-AMP. The other activity is designated 'posttransfer' editing and involves deacylation of mischarged Ala-tRNA(Pro). The misacylated Cys-tRNA(Pro) is not edited by ProRS. The sequence is that of Proline--tRNA ligase from Pseudomonas putida (strain W619).